The sequence spans 121 residues: Small ribosomal subunit protein uS13 (121 aa).

The interval 91–121 (HRKGLPMRGQRTRTNARTRKGPRKAGVALKK) is disordered.

The protein belongs to the universal ribosomal protein uS13 family. As to quaternary structure, part of the 30S ribosomal subunit. Forms a loose heterodimer with protein S19. Forms two bridges to the 50S subunit in the 70S ribosome.

Its function is as follows. Located at the top of the head of the 30S subunit, it contacts several helices of the 16S rRNA. In the 70S ribosome it contacts the 23S rRNA (bridge B1a) and protein L5 of the 50S subunit (bridge B1b), connecting the 2 subunits; these bridges are implicated in subunit movement. Contacts the tRNAs in the A and P-sites. The sequence is that of Small ribosomal subunit protein uS13 from Cupriavidus necator (strain ATCC 17699 / DSM 428 / KCTC 22496 / NCIMB 10442 / H16 / Stanier 337) (Ralstonia eutropha).